The sequence spans 669 residues: MADPASYRPQTGEIPTNPGVYRFRDPHGRVIYVGKAKSLRSRLNSYFANPGGLLPKTYAMVHAASSVEWTVVASELESLQLEYTWIKEFKPRFNVVFRDDKTYPYLAVTMGEKFPRVQVLRGERRKGTRYFGPYTAGAIRETMDTLLRVFPVRSCSPGVLKRAQASGRPCLLGYIDKCAAPCVGRVTPEEHRALAEDFCSFMGGEAKRFIGRLEKDMAAAVAELDYERAARVRDDIIALRKVFERNAVVLAEDTDADVFALHEDELEAAVQVFHVRGGRVRGQRGWVVEKVEDFTTPDLVEHLLQQVYGEEGETQGRLPREVLVPEEPSNAAELAQWLAGLRGAKVDIRVPRRGDKAALMSTVRENAEHALKLHKSRRAGDLTNRSLALQELQEALDLPVALLRIECFDISHVQGTNVVASMVVVEDGLPKKSDYRKFSITGAAAVDDTAAMHDVLTRRFRNYLQEKAAQAEAAQLPGHQAALEAMAVASMQDTTTPAPRAKFAYPPNLVVVDGGKPQVNAAARALAELGIDDVYVVGLAKRLEEVWLPDSDFPVILPRTSEGLYLLQRIRDEAHRFAITFHRQKRGKAMTVSALDSVPGLGEAKRKALLAQFGSVKSIRTASAAELATAKGIGPSLADAIVSHFSNGAAASGAEAPSINMTTGEIIET.

Residues 16–95 form the GIY-YIG domain; sequence TNPGVYRFRD…IKEFKPRFNV (80 aa). Positions 207–242 constitute a UVR domain; the sequence is KRFIGRLEKDMAAAVAELDYERAARVRDDIIALRKV.

Belongs to the UvrC family. Interacts with UvrB in an incision complex.

It localises to the cytoplasm. Its function is as follows. The UvrABC repair system catalyzes the recognition and processing of DNA lesions. UvrC both incises the 5' and 3' sides of the lesion. The N-terminal half is responsible for the 3' incision and the C-terminal half is responsible for the 5' incision. The chain is UvrABC system protein C from Arthrobacter sp. (strain FB24).